Here is a 261-residue protein sequence, read N- to C-terminus: uncharacterized protein (261 aa).

Position 22–46 (22–46 (IVTGGNSGLGQAFAMALAKAGANIF)) interacts with NADP(+). Serine 153 is a binding site for substrate. Catalysis depends on tyrosine 166, which acts as the Proton acceptor.

The protein belongs to the short-chain dehydrogenases/reductases (SDR) family.

This is an uncharacterized protein from Escherichia coli (strain K12).